The following is a 37-amino-acid chain: U1-theraphotoxin-Hs1b (37 aa).

Disulfide bonds link C4–C18, C8–C29, and C23–C34.

In terms of assembly, form 1 and form 2 may dimerize. As to expression, expressed by the venom gland.

It is found in the secreted. Its function is as follows. Lethal neurotoxin that blocks neuromuscular transmission. Acts cooperatively to potentiate the activity of huwentoxin-I. The sequence is that of U1-theraphotoxin-Hs1b from Cyriopagopus schmidti (Chinese bird spider).